The chain runs to 977 residues: Phosphatidylinositol 4-kinase PIK1alpha (977 aa).

The 125-residue stretch at 1–125 (MSADITETPN…QAVRNLITKI (125 aa)) folds into the PIK helical domain. Positions 205–261 (MSADIPKGSHSDDETATSSSIKPSLSRSASVPRRNTKKTSLSFSSDESEAYTTDDDD) are disordered. Residues 220-233 (ATSSSIKPSLSRSA) show a composition bias toward polar residues. Residues 250–261 (DESEAYTTDDDD) are compositionally biased toward acidic residues. Positions 679–960 (EDWNTKKQRI…FLIGKSLGSM (282 aa)) constitute a PI3K/PI4K catalytic domain. Positions 685–691 (KQRIKKS) are G-loop. The segment at 826–834 (QIKDRHNGN) is catalytic loop. Positions 845-869 (HIDFGFLLSNSPGSVGFEAAPFKLT) are activation loop.

Belongs to the PI3/PI4-kinase family. Type III PI4K subfamily.

It is found in the nucleus. The catalysed reaction is a 1,2-diacyl-sn-glycero-3-phospho-(1D-myo-inositol) + ATP = a 1,2-diacyl-sn-glycero-3-phospho-(1D-myo-inositol 4-phosphate) + ADP + H(+). Its function is as follows. Acts on phosphatidylinositol (PI) in the first committed step in the production of the second messenger inositol 1,4,5,-trisphosphate. In Candida albicans (strain SC5314 / ATCC MYA-2876) (Yeast), this protein is Phosphatidylinositol 4-kinase PIK1alpha (PIKALPHA).